A 221-amino-acid chain; its full sequence is CASP-like protein 4B1 (221 aa).

The segment at 1–78 is disordered; it reads MAMQLHAASP…HDHHGGGGGG (78 aa). The Cytoplasmic portion of the chain corresponds to 1–87; sequence MAMQLHAASP…GDEATQLLNG (87 aa). A compositionally biased stretch (pro residues) spans 19-33; it reads SPPPPPPLSPHPEPA. Low complexity predominate over residues 50–62; it reads APVATATTPLTPG. Residues 88–108 form a helical membrane-spanning segment; sequence IVLVLRAGAALLSFVAMALVA. At 109 to 125 the chain is on the extracellular side; sequence SCRHGDWMDFLRYQEYR. The helical transmembrane segment at 126-146 threads the bilayer; it reads YLLGVSVVAFVYSAAQALKNF. Topologically, residues 147–160 are cytoplasmic; it reads RRRRRGAADASFLD. Residues 161 to 181 traverse the membrane as a helical segment; that stretch reads FAGDQAVAYLLVTASAAALPI. Residues 182-196 are Extracellular-facing; that stretch reads TIRMRSAVVNVFTDA. Residues 197-217 traverse the membrane as a helical segment; sequence IAASIALGFLAFAALALSAML. At 218–221 the chain is on the cytoplasmic side; it reads SRHA.

The protein belongs to the Casparian strip membrane proteins (CASP) family. As to quaternary structure, homodimer and heterodimers.

It is found in the cell membrane. This Hordeum vulgare subsp. vulgare (Domesticated barley) protein is CASP-like protein 4B1.